The sequence spans 349 residues: Sterol-4-alpha-carboxylate 3-dehydrogenase ERG26, decarboxylating (349 aa).

NADP(+) contacts are provided by residues 11–17 (GGSGFLG), 62–63 (DL), and 84–86 (CAS). Positions 124 and 151 each coordinate substrate. NADP(+) contacts are provided by residues Tyr151, Lys155, and 179-182 (PAGI). The Proton donor role is filled by Lys155.

This sequence belongs to the 3-beta-HSD family. Heterotetramer of ERG25, ERG26, ERG27 and ERG28. ERG28 acts as a scaffold to tether ERG27 and other 4,4-demethylation-related enzymes, forming a demethylation enzyme complex, in the endoplasmic reticulum.

It localises to the endoplasmic reticulum membrane. It carries out the reaction 4beta-methylzymosterol-4alpha-carboxylate + NADP(+) = 3-dehydro-4-methylzymosterol + CO2 + NADPH. It functions in the pathway steroid biosynthesis; zymosterol biosynthesis; zymosterol from lanosterol: step 4/6. Inhibited by FR171456, a natural product with broad antifungal activity. In terms of biological role, sterol-4-alpha-carboxylate 3-dehydrogenase; part of the third module of ergosterol biosynthesis pathway that includes the late steps of the pathway. ERG26 is a catalytic component of the C-4 demethylation complex that catalyzes the oxidative decarboxylation that results in a reduction of the 3-beta-hydroxy group at the C-3 carbon to an oxo group. The third module or late pathway involves the ergosterol synthesis itself through consecutive reactions that mainly occur in the endoplasmic reticulum (ER) membrane. Firstly, the squalene synthase ERG9 catalyzes the condensation of 2 farnesyl pyrophosphate moieties to form squalene, which is the precursor of all steroids. Squalene synthase is crucial for balancing the incorporation of farnesyl diphosphate (FPP) into sterol and nonsterol isoprene synthesis. Secondly, the squalene epoxidase ERG1 catalyzes the stereospecific oxidation of squalene to (S)-2,3-epoxysqualene, which is considered to be a rate-limiting enzyme in steroid biosynthesis. Then, the lanosterol synthase ERG7 catalyzes the cyclization of (S)-2,3 oxidosqualene to lanosterol, a reaction that forms the sterol core. In the next steps, lanosterol is transformed to zymosterol through a complex process involving various demethylation, reduction and desaturation reactions. The lanosterol 14-alpha-demethylase ERG11 (also known as CYP51) catalyzes C14-demethylation of lanosterol to produce 4,4'-dimethyl cholesta-8,14,24-triene-3-beta-ol, which is critical for ergosterol biosynthesis. The C-14 reductase ERG24 reduces the C14=C15 double bond of 4,4-dimethyl-cholesta-8,14,24-trienol to produce 4,4-dimethyl-cholesta-8,24-dienol. 4,4-dimethyl-cholesta-8,24-dienol is substrate of the C-4 demethylation complex ERG25-ERG26-ERG27 in which ERG25 catalyzes the three-step monooxygenation required for the demethylation of 4,4-dimethyl and 4alpha-methylsterols, ERG26 catalyzes the oxidative decarboxylation that results in a reduction of the 3-beta-hydroxy group at the C-3 carbon to an oxo group, and ERG27 is responsible for the reduction of the keto group on the C-3. ERG28 has a role as a scaffold to help anchor ERG25, ERG26 and ERG27 to the endoplasmic reticulum and ERG29 regulates the activity of the iron-containing C4-methylsterol oxidase ERG25. Then, the sterol 24-C-methyltransferase ERG6 catalyzes the methyl transfer from S-adenosyl-methionine to the C-24 of zymosterol to form fecosterol. The C-8 sterol isomerase ERG2 catalyzes the reaction which results in unsaturation at C-7 in the B ring of sterols and thus converts fecosterol to episterol. The sterol-C5-desaturase ERG3 then catalyzes the introduction of a C-5 double bond in the B ring to produce 5-dehydroepisterol. The C-22 sterol desaturase ERG5 further converts 5-dehydroepisterol into ergosta-5,7,22,24(28)-tetraen-3beta-ol by forming the C-22(23) double bond in the sterol side chain. Finally, ergosta-5,7,22,24(28)-tetraen-3beta-ol is substrate of the C-24(28) sterol reductase ERG4 to produce ergosterol. This is Sterol-4-alpha-carboxylate 3-dehydrogenase ERG26, decarboxylating from Saccharomyces cerevisiae (strain ATCC 204508 / S288c) (Baker's yeast).